A 368-amino-acid chain; its full sequence is Protein-glutamate methylesterase/protein-glutamine glutaminase (368 aa).

A Response regulatory domain is found at 9–126 (KVLVVDDSAF…SINMKELKDE (118 aa)). Asp60 is modified (4-aspartylphosphate). One can recognise a CheB-type methylesterase domain in the interval 161-354 (SVPARIAVAI…ETVVKAVEII (194 aa)). Residues Ser173, His200, and Asp296 contribute to the active site.

This sequence belongs to the CheB family. In terms of processing, phosphorylated by CheA. Phosphorylation of the N-terminal regulatory domain activates the methylesterase activity.

The protein localises to the cytoplasm. The enzyme catalyses [protein]-L-glutamate 5-O-methyl ester + H2O = L-glutamyl-[protein] + methanol + H(+). The catalysed reaction is L-glutaminyl-[protein] + H2O = L-glutamyl-[protein] + NH4(+). Functionally, involved in chemotaxis. Part of a chemotaxis signal transduction system that modulates chemotaxis in response to various stimuli. Catalyzes the demethylation of specific methylglutamate residues introduced into the chemoreceptors (methyl-accepting chemotaxis proteins or MCP) by CheR. Also mediates the irreversible deamidation of specific glutamine residues to glutamic acid. The sequence is that of Protein-glutamate methylesterase/protein-glutamine glutaminase from Pyrococcus horikoshii (strain ATCC 700860 / DSM 12428 / JCM 9974 / NBRC 100139 / OT-3).